The chain runs to 101 residues: Apolipoprotein C-II (101 aa).

A signal peptide spans 1-22 (MGTRFLLALFLVLLVLGFEVQG). The segment at 66–74 (TVDEKLRDM) is lipid binding. Residues 78-101 (STAAMSTYAGILTDQVLSMLKGEE) form a lipoprotein lipase cofactor region.

The protein belongs to the apolipoprotein C2 family. Post-translationally, proapolipoprotein C-II is synthesized as a sialic acid containing glycoprotein which is subsequently desialylated prior to its proteolytic processing. In terms of processing, proapolipoprotein C-II, the major form found in plasma undergoes proteolytic cleavage of its N-terminal hexapeptide to generate apolipoprotein C-II, which occurs as the minor form in plasma.

The protein localises to the secreted. Its function is as follows. Component of chylomicrons, very low-density lipoproteins (VLDL), low-density lipoproteins (LDL), and high-density lipoproteins (HDL) in plasma. Plays an important role in lipoprotein metabolism as an activator of lipoprotein lipase. Both proapolipoprotein C-II and apolipoprotein C-II can activate lipoprotein lipase. The sequence is that of Apolipoprotein C-II (APOC2) from Plecturocebus moloch (Dusky titi monkey).